A 552-amino-acid chain; its full sequence is 4-coumarate--CoA ligase-like 4 (552 aa).

The disordered stretch occupies residues 182-205; sequence ISATTPDPARRKDRVTQDDPATLL. Basic and acidic residues predominate over residues 189–198; it reads PARRKDRVTQ. Positions 207, 208, 209, 210, 211, and 215 each coordinate ATP. Residue tyrosine 256 participates in (E)-4-coumaroyl-AMP binding. Lysine 277 provides a ligand contact to CoA. The SBD1 stretch occupies residues 279-346; sequence ELPEMLRSIN…EKYPQVEILQ (68 aa). Residues glycine 324, glutamine 346, glycine 347, and threonine 351 each coordinate (E)-4-coumaroyl-AMP. The ATP site is built by glutamine 346, glycine 347, threonine 351, aspartate 432, and arginine 447. The tract at residues 347-411 is SBD2; it reads GYGLTESTAI…IRGPYVMKGY (65 aa). (E)-4-coumaroyl-AMP is bound by residues lysine 449 and lysine 453. CoA contacts are provided by lysine 455 and glycine 456. Lysine 538 provides a ligand contact to ATP.

The protein belongs to the ATP-dependent AMP-binding enzyme family. Mg(2+) serves as cofactor.

It catalyses the reaction (E)-4-coumarate + ATP + CoA = (E)-4-coumaroyl-CoA + AMP + diphosphate. The catalysed reaction is (E)-4-coumarate + ATP + H(+) = (E)-4-coumaroyl-AMP + diphosphate. The enzyme catalyses (E)-4-coumaroyl-AMP + CoA = (E)-4-coumaroyl-CoA + AMP + H(+). Its function is as follows. Carboxylate--CoA ligase that may use 4-coumarate as substrate. Follows a two-step reaction mechanism, wherein the carboxylate substrate first undergoes adenylation by ATP, followed by a thioesterification in the presence of CoA to yield the final CoA thioester. The sequence is that of 4-coumarate--CoA ligase-like 4 (4CLL4) from Oryza sativa subsp. japonica (Rice).